Reading from the N-terminus, the 409-residue chain is Mitochondrial inner membrane protein oxa1-2 (409 aa).

Residues 76 to 96 traverse the membrane as a helical segment; the sequence is VVYTPSLPLSSSVLASFSFLP. Residues 97-114 are Mitochondrial intermembrane-facing; it reads HNILQNGLNTLHIWSGLP. A helical membrane pass occupies residues 115–135; it reads WWASIAACAVAMRIAVFPIML. The Mitochondrial matrix segment spans residues 136–188; it reads KMMKTSAKLAIINPKVAEHMSVLSKAKAEGNSELMMQATTQIQNLYKVNNVNP. A helical membrane pass occupies residues 189–209; that stretch reads LNLLSAPVFQGILFISFFYAL. Residues 210–235 lie on the Mitochondrial intermembrane side of the membrane; sequence KTMAGVPVEGFTDGGFWWVNDLSQPD. The helical transmembrane segment at 236 to 256 threads the bilayer; the sequence is PLHIFPVANGLLMLLNIELGS. Residues 257 to 275 lie on the Mitochondrial matrix side of the membrane; the sequence is ETGSNKVAMSPSMKKFFRF. Residues 276–296 form a helical membrane-spanning segment; sequence LCLASPLFTMNFPMAIFMYWF. Topologically, residues 297–409 are mitochondrial intermembrane; that stretch reads PSNVFSVFQG…SVTKPTEKKD (113 aa). The disordered stretch occupies residues 369-409; that stretch reads TDTNNEQKPTNNSTITKATTLSDNSQNDKSSSVTKPTEKKD. The span at 374–403 shows a compositional bias: polar residues; that stretch reads EQKPTNNSTITKATTLSDNSQNDKSSSVTK.

This sequence belongs to the OXA1/ALB3/YidC family.

The protein resides in the mitochondrion inner membrane. Functionally, required for the insertion of integral membrane proteins into the mitochondrial inner membrane. Essential for the activity and assembly of cytochrome c oxidase. It is essential for viability while oxa101 is not. When both are deleted the cell is non-viable, suggesting that oxa101 act as a back-up for oxa102. In Schizosaccharomyces pombe (strain 972 / ATCC 24843) (Fission yeast), this protein is Mitochondrial inner membrane protein oxa1-2 (oxa102).